The sequence spans 303 residues: Putative S-adenosyl-L-methionine-dependent methyltransferase SCO6443 (303 aa).

S-adenosyl-L-methionine contacts are provided by residues Asp130 and 159–160; that span reads DL.

Belongs to the UPF0677 family.

Functionally, exhibits S-adenosyl-L-methionine-dependent methyltransferase activity. The polypeptide is Putative S-adenosyl-L-methionine-dependent methyltransferase SCO6443 (Streptomyces coelicolor (strain ATCC BAA-471 / A3(2) / M145)).